The following is a 366-amino-acid chain: Bacteriochlorophyll a protein (366 aa).

Bacteriochlorophyll a-binding residues include His-110, His-145, His-290, His-297, and His-298.

Homotrimer. Each subunit contains 7 molecules of bacteriochlorophyll a.

In terms of biological role, intermediary in the transfer of excitation energy from the chlorophyll to the reaction centers. The chain is Bacteriochlorophyll a protein from Prosthecochloris aestuarii.